Here is a 483-residue protein sequence, read N- to C-terminus: tRNA sulfurtransferase (483 aa).

The THUMP domain occupies 61-165 (AEVLEILTTT…DELLNQVIAR (105 aa)). ATP-binding positions include 183–184 (LI), Lys265, Gly287, and Gln296. A disulfide bond links Cys344 and Cys457. One can recognise a Rhodanese domain in the interval 405-483 (EEGNAVVLDI…GFNNVKVYRP (79 aa)). The active-site Cysteine persulfide intermediate is Cys457.

The protein belongs to the ThiI family.

It is found in the cytoplasm. The enzyme catalyses [ThiI sulfur-carrier protein]-S-sulfanyl-L-cysteine + a uridine in tRNA + 2 reduced [2Fe-2S]-[ferredoxin] + ATP + H(+) = [ThiI sulfur-carrier protein]-L-cysteine + a 4-thiouridine in tRNA + 2 oxidized [2Fe-2S]-[ferredoxin] + AMP + diphosphate. It carries out the reaction [ThiS sulfur-carrier protein]-C-terminal Gly-Gly-AMP + S-sulfanyl-L-cysteinyl-[cysteine desulfurase] + AH2 = [ThiS sulfur-carrier protein]-C-terminal-Gly-aminoethanethioate + L-cysteinyl-[cysteine desulfurase] + A + AMP + 2 H(+). Its pathway is cofactor biosynthesis; thiamine diphosphate biosynthesis. Functionally, catalyzes the ATP-dependent transfer of a sulfur to tRNA to produce 4-thiouridine in position 8 of tRNAs, which functions as a near-UV photosensor. Also catalyzes the transfer of sulfur to the sulfur carrier protein ThiS, forming ThiS-thiocarboxylate. This is a step in the synthesis of thiazole, in the thiamine biosynthesis pathway. The sulfur is donated as persulfide by IscS. This is tRNA sulfurtransferase from Vibrio cholerae serotype O1 (strain ATCC 39315 / El Tor Inaba N16961).